Consider the following 367-residue polypeptide: Inositol-3-phosphate synthase (367 aa).

D78, A137, Y157, S200, D235, and K248 together coordinate NAD(+).

This sequence belongs to the myo-inositol 1-phosphate synthase family. The cofactor is NAD(+).

It catalyses the reaction D-glucose 6-phosphate = 1D-myo-inositol 3-phosphate. Its function is as follows. Key enzyme in myo-inositol biosynthesis pathway that catalyzes the conversion of glucose 6-phosphate to 1D-myo-inositol 3-phosphate in a NAD-dependent manner. This Mycobacterium tuberculosis (strain CDC 1551 / Oshkosh) protein is Inositol-3-phosphate synthase (ino1).